The chain runs to 88 residues: Small ribosomal subunit protein bS16c (88 aa).

It belongs to the bacterial ribosomal protein bS16 family.

The protein resides in the plastid. It is found in the chloroplast. This chain is Small ribosomal subunit protein bS16c, found in Gossypium hirsutum (Upland cotton).